A 106-amino-acid polypeptide reads, in one-letter code: P4 prophage-derived uncharacterized protein t2655 (106 aa).

In Salmonella typhi, this protein is P4 prophage-derived uncharacterized protein t2655.